Here is a 222-residue protein sequence, read N- to C-terminus: Collectrin (222 aa).

A signal peptide spans 1–14 (MLWALFFLVTTIHA). At 15-141 (ELCRPDAENA…LAPPMDPSVP (127 aa)) the chain is on the extracellular side. The region spanning 21 to 222 (AENAFKVRLS…LTEDERLTPL (202 aa)) is the Collectrin-like domain. N-linked (GlcNAc...) asparagine glycans are attached at residues N76 and N93. The helical transmembrane segment at 142–162 (VWIIVFGVIFCIVTVAIALLV) threads the bilayer. Residues 163–222 (LSGIRQRRRNKKGPPGVEDAEDKCENIITIENGIPCDPLDMKGGHINDGFLTEDERLTPL) are Cytoplasmic-facing. Phosphothreonine is present on residues T214 and T220.

The protein belongs to the CLTRN family. As to quaternary structure, monomer. Homodimer; dimerization prevents CLTRN cleavage by BACE2. Interacts with SLC6A18; this interaction regulates the trafficking of SLC6A18 to the cell membrane and its amino acid transporter activity. Interacts with SLC6A19; this interaction regulates the trafficking of SLC6A19 to the cell membrane and its amino acid transporter activity. Interacts with SNAPIN. Glycosylated. Glycosylation is required for plasma membrane localization and for its cleavage by BACE2. Post-translationally, proteolytically processed in pancreatic beta cells by BACE2 leading to the generation and extracellular release of soluble CLTRN, and a corresponding cell-associated C-terminal fragment which is later cleaved by gamma-secretase. This shedding process inactivates CLTRN. Three cleavage sites have been identified for BACE2, two clustered sites after Phe-116 and Leu-118 and a more membrane proximal site at Phe-125; the preferred BACE2 cleavage site seems to be between Phe-125 and Leu-126, Phe-116 and Leu-118 act as alternative sites. As to expression, kidney; collecting ducts. Pancreas; beta cells of islets.

The protein resides in the cell membrane. Its function is as follows. Plays an important role in amino acid transport by acting as binding partner of amino acid transporters SLC6A18 and SLC6A19, regulating their trafficking on the cell surface and their activity. May also play a role in trafficking of amino acid transporters SLC3A1 and SLC7A9 to the renal cortical cell membrane. Regulator of SNARE complex function. Stimulator of beta cell replication. This Rattus norvegicus (Rat) protein is Collectrin.